The chain runs to 557 residues: Glucose-6-phosphate isomerase (557 aa).

An N-acetylalanine modification is found at alanine 2. At lysine 12 the chain carries N6-acetyllysine. Serine 107 carries the post-translational modification Phosphoserine. Position 142 is an N6-acetyllysine (lysine 142). Position 159–160 (159–160 (GS)) interacts with D-glucose 6-phosphate. Serine 185 carries the phosphoserine; by CK2 modification. Position 210 to 215 (210 to 215 (SKTFTT)) interacts with D-glucose 6-phosphate. Threonine 250 is modified (phosphothreonine). D-glucose 6-phosphate-binding residues include glutamine 354, glutamate 358, and histidine 389. Residue glutamate 358 is the Proton donor of the active site. Residue histidine 389 is part of the active site. Serine 455 is subject to Phosphoserine. Lysine 519 contacts D-glucose 6-phosphate. Residue lysine 519 is part of the active site.

The protein belongs to the GPI family. As to quaternary structure, homodimer; in the catalytically active form. Monomer in the secreted form. Post-translationally, phosphorylation at Ser-185 by CK2 has been shown to decrease enzymatic activity and may contribute to secretion by a non-classical secretory pathway. ISGylated.

It is found in the cytoplasm. The protein resides in the secreted. It carries out the reaction alpha-D-glucose 6-phosphate = beta-D-fructose 6-phosphate. The protein operates within carbohydrate degradation; glycolysis; D-glyceraldehyde 3-phosphate and glycerone phosphate from D-glucose: step 2/4. In the cytoplasm, catalyzes the conversion of glucose-6-phosphate to fructose-6-phosphate, the second step in glycolysis, and the reverse reaction during gluconeogenesis. Besides it's role as a glycolytic enzyme, also acts as a secreted cytokine: acts as an angiogenic factor (AMF) that stimulates endothelial cell motility. Acts as a neurotrophic factor, neuroleukin, for spinal and sensory neurons. It is secreted by lectin-stimulated T-cells and induces immunoglobulin secretion. This is Glucose-6-phosphate isomerase from Bos taurus (Bovine).